Consider the following 474-residue polypeptide: Probable CAAX prenyl protease 1 (474 aa).

Helical transmembrane passes span 103–123 (SWFS…IIKY), 196–216 (IFVI…SVVV), and 230–250 (FIMY…TIAP). Histidine 332 serves as a coordination point for Zn(2+). Glutamate 333 is an active-site residue. A Zn(2+)-binding site is contributed by histidine 336. The next 2 membrane-spanning stretches (helical) occupy residues 344–364 (INTI…AAFI) and 381–401 (VIVG…ILTF). Zn(2+) is bound at residue glutamate 411. Aspartate 415 functions as the Proton donor in the catalytic mechanism.

The protein belongs to the peptidase M48A family. Zn(2+) serves as cofactor.

The protein resides in the endoplasmic reticulum membrane. The enzyme catalyses Hydrolyzes the peptide bond -P2-(S-farnesyl or geranylgeranyl)C-P1'-P2'-P3'-COOH where P1' and P2' are amino acids with aliphatic side chains and P3' is any C-terminal residue.. Proteolytically removes the C-terminal three residues of farnesylated proteins. In Schizosaccharomyces pombe (strain 972 / ATCC 24843) (Fission yeast), this protein is Probable CAAX prenyl protease 1.